A 221-amino-acid polypeptide reads, in one-letter code: Thiamine-phosphate synthase (221 aa).

4-amino-2-methyl-5-(diphosphooxymethyl)pyrimidine-binding positions include 44 to 48 (QFREK) and Asn79. The Mg(2+) site is built by Asp80 and Asp99. Ser117 lines the 4-amino-2-methyl-5-(diphosphooxymethyl)pyrimidine pocket. 2-[(2R,5Z)-2-carboxy-4-methylthiazol-5(2H)-ylidene]ethyl phosphate is bound at residue 143 to 145 (TSS). Residue Lys146 participates in 4-amino-2-methyl-5-(diphosphooxymethyl)pyrimidine binding. 2-[(2R,5Z)-2-carboxy-4-methylthiazol-5(2H)-ylidene]ethyl phosphate contacts are provided by residues Gly175 and 195-196 (IS).

It belongs to the thiamine-phosphate synthase family. Mg(2+) is required as a cofactor.

The catalysed reaction is 2-[(2R,5Z)-2-carboxy-4-methylthiazol-5(2H)-ylidene]ethyl phosphate + 4-amino-2-methyl-5-(diphosphooxymethyl)pyrimidine + 2 H(+) = thiamine phosphate + CO2 + diphosphate. It carries out the reaction 2-(2-carboxy-4-methylthiazol-5-yl)ethyl phosphate + 4-amino-2-methyl-5-(diphosphooxymethyl)pyrimidine + 2 H(+) = thiamine phosphate + CO2 + diphosphate. The enzyme catalyses 4-methyl-5-(2-phosphooxyethyl)-thiazole + 4-amino-2-methyl-5-(diphosphooxymethyl)pyrimidine + H(+) = thiamine phosphate + diphosphate. It functions in the pathway cofactor biosynthesis; thiamine diphosphate biosynthesis; thiamine phosphate from 4-amino-2-methyl-5-diphosphomethylpyrimidine and 4-methyl-5-(2-phosphoethyl)-thiazole: step 1/1. Functionally, condenses 4-methyl-5-(beta-hydroxyethyl)thiazole monophosphate (THZ-P) and 2-methyl-4-amino-5-hydroxymethyl pyrimidine pyrophosphate (HMP-PP) to form thiamine monophosphate (TMP). The polypeptide is Thiamine-phosphate synthase (Geobacillus kaustophilus (strain HTA426)).